The following is a 683-amino-acid chain: Bifunctional lysine-specific demethylase and histidyl-hydroxylase NO66 (683 aa).

Positions 1-26 are enriched in polar residues; that stretch reads MHKASTSSANRANFQGNHKTQKSPNN. 2 disordered regions span residues 1 to 162 and 179 to 208; these read MHKA…SPIQ and AAGA…AAKS. Residues 54 to 65 are compositionally biased toward basic and acidic residues; sequence LTKEQKERRKMM. The span at 85–94 shows a compositional bias: polar residues; the sequence is IDTSASTSNK. Over residues 95-108 the composition is skewed to basic residues; that stretch reads GKSKAARPTDRKRR. The span at 116-125 shows a compositional bias: low complexity; the sequence is PADANNNNTK. At serine 152 the chain carries Phosphoserine. Threonine 158 bears the Phosphothreonine mark. The residue at position 159 (serine 159) is a Phosphoserine. Over residues 179-189 the composition is skewed to low complexity; sequence AAGASGASGPA. The JmjC domain maps to 341-480; that stretch reads NPSTYLVGLR…NLLEKLMPIV (140 aa). Fe cation-binding residues include histidine 381, aspartate 383, and histidine 446.

It belongs to the ROX family. NO66 subfamily. The cofactor is Fe(2+).

The protein resides in the nucleus. The catalysed reaction is N(6),N(6)-dimethyl-L-lysyl(36)-[histone H3] + 2 2-oxoglutarate + 2 O2 = L-lysyl(36)-[histone H3] + 2 formaldehyde + 2 succinate + 2 CO2. Functionally, oxygenase that can act as both a histone lysine demethylase and a ribosomal histidine hydroxylase. Specifically demethylates 'Lys-4' (H3K4me) and 'Lys-36' (H3K36me) of histone H3, thereby playing a central role in histone code. The protein is Bifunctional lysine-specific demethylase and histidyl-hydroxylase NO66 of Drosophila yakuba (Fruit fly).